Reading from the N-terminus, the 199-residue chain is 5'-deoxynucleotidase YfbR (199 aa).

Substrate contacts are provided by residues 18–19 (RW) and His33. An HD domain is found at 30–142 (VSEHSLQVAM…VKQADALCAY (113 aa)). Positions 33, 68, and 69 each coordinate a divalent metal cation. Residues Asp69, 77–80 (DLPT), and Asp137 contribute to the substrate site. Asp137 is an a divalent metal cation binding site.

This sequence belongs to the 5DNU family. In terms of assembly, homodimer. The cofactor is a divalent metal cation.

It localises to the cytoplasm. It carries out the reaction a 2'-deoxyribonucleoside 5'-phosphate + H2O = a 2'-deoxyribonucleoside + phosphate. Its function is as follows. Catalyzes the strictly specific dephosphorylation of 2'-deoxyribonucleoside 5'-monophosphates. The polypeptide is 5'-deoxynucleotidase YfbR (Escherichia coli O45:K1 (strain S88 / ExPEC)).